The primary structure comprises 456 residues: Adenylosuccinate lyase (456 aa).

N(6)-(1,2-dicarboxyethyl)-AMP is bound by residues 15–16, 90–92, and 122–123; these read RY, NHD, and TS. H171 functions as the Proton donor/acceptor in the catalytic mechanism. Q247 contacts N(6)-(1,2-dicarboxyethyl)-AMP. Catalysis depends on S295, which acts as the Proton donor/acceptor. N(6)-(1,2-dicarboxyethyl)-AMP is bound by residues S296, 301–303, N309, R335, and 340–344; these read KVN and STVLR.

This sequence belongs to the lyase 1 family. Adenylosuccinate lyase subfamily. As to quaternary structure, homotetramer. Residues from neighboring subunits contribute catalytic and substrate-binding residues to each active site.

It catalyses the reaction N(6)-(1,2-dicarboxyethyl)-AMP = fumarate + AMP. The catalysed reaction is (2S)-2-[5-amino-1-(5-phospho-beta-D-ribosyl)imidazole-4-carboxamido]succinate = 5-amino-1-(5-phospho-beta-D-ribosyl)imidazole-4-carboxamide + fumarate. The protein operates within purine metabolism; AMP biosynthesis via de novo pathway; AMP from IMP: step 2/2. Its pathway is purine metabolism; IMP biosynthesis via de novo pathway; 5-amino-1-(5-phospho-D-ribosyl)imidazole-4-carboxamide from 5-amino-1-(5-phospho-D-ribosyl)imidazole-4-carboxylate: step 2/2. Functionally, catalyzes two reactions in de novo purine nucleotide biosynthesis. Catalyzes the breakdown of 5-aminoimidazole- (N-succinylocarboxamide) ribotide (SAICAR or 2-[5-amino-1-(5-phospho-beta-D-ribosyl)imidazole-4-carboxamido]succinate) to 5-aminoimidazole-4-carboxamide ribotide (AICAR or 5-amino-1-(5-phospho-beta-D-ribosyl)imidazole-4-carboxamide) and fumarate, and of adenylosuccinate (ADS or N(6)-(1,2-dicarboxyethyl)-AMP) to adenosine monophosphate (AMP) and fumarate. In Legionella pneumophila subsp. pneumophila (strain Philadelphia 1 / ATCC 33152 / DSM 7513), this protein is Adenylosuccinate lyase (purB).